Consider the following 220-residue polypeptide: MADS-box protein AGL24 (220 aa).

The MADS-box domain occupies 1–61 (MAREKIRIKK…GKLFEFSSSR (61 aa)). Residues 87–177 (LRLENCNLSR…RDKLETLERA (91 aa)) form the K-box domain. The span at 190–200 (SVTTNVSSYDS) shows a compositional bias: polar residues. Residues 190-220 (SVTTNVSSYDSGTPLEDDSDTSLKLGLPSWE) are disordered.

In terms of assembly, interacts with IMK3/MRLK. Forms a homodimer and heterodimer with SOC1, AP1 and SVP through MADS-box domain. Interacts with the SEU-LUG corepressor complex when complexed to AP1. Interacts with AGL15 and AGL16. In terms of processing, phosphorylated by IMK3. Induced by vernalization. Mostly expressed in shoot apical meristems, including floral meristems. Also detected in stems, seedlings, leaves, flowers and siliques, and, to a lower extent, in roots.

The protein resides in the nucleus. It is found in the cytoplasm. Its function is as follows. Transcription activator that mediates floral transition in response to vernalization. Promotes inflorescence fate in apical meristems. Acts in a dosage-dependent manner. Probably involved in the transduction of RLK-mediated signaling (e.g. IMK3 pathway). Together with AP1 and SVP, controls the identity of the floral meristem and regulates expression of class B, C and E genes. When associated with SOC1, mediates effect of gibberellins on flowering under short-day conditions, and regulates the expression of LEAFY (LFY), which links floral induction and floral development. Confers inflorescence characteristics to floral primordia and early flowering. The sequence is that of MADS-box protein AGL24 (AGL24) from Arabidopsis thaliana (Mouse-ear cress).